The sequence spans 274 residues: Large ribosomal subunit protein uL2 (274 aa).

The disordered stretch occupies residues 224–256 (VMNPVDHPHGGGEGKTGEGRHPVDPWGNLTKGY). The span at 229 to 246 (DHPHGGGEGKTGEGRHPV) shows a compositional bias: basic and acidic residues.

The protein belongs to the universal ribosomal protein uL2 family. In terms of assembly, part of the 50S ribosomal subunit. Forms a bridge to the 30S subunit in the 70S ribosome.

Its function is as follows. One of the primary rRNA binding proteins. Required for association of the 30S and 50S subunits to form the 70S ribosome, for tRNA binding and peptide bond formation. It has been suggested to have peptidyltransferase activity; this is somewhat controversial. Makes several contacts with the 16S rRNA in the 70S ribosome. In Polaromonas naphthalenivorans (strain CJ2), this protein is Large ribosomal subunit protein uL2.